The sequence spans 234 residues: UPF0173 metal-dependent hydrolase Atu1317 (234 aa).

Belongs to the UPF0173 family.

This chain is UPF0173 metal-dependent hydrolase Atu1317, found in Agrobacterium fabrum (strain C58 / ATCC 33970) (Agrobacterium tumefaciens (strain C58)).